The primary structure comprises 427 residues: GTPase ERA-like, chloroplastic (427 aa).

The N-terminal 39 residues, methionine 1 to threonine 39, are a transit peptide targeting the chloroplast. One can recognise an Era-type G domain in the interval arginine 128–phenylalanine 298. A G1 region spans residues glycine 136 to serine 143. Glycine 136 to serine 143 serves as a coordination point for GTP. The G2 stretch occupies residues glutamine 162–histidine 166. Residues aspartate 183–glycine 186 form a G3 region. Residues aspartate 183–valine 187 and asparagine 248–aspartate 251 each bind GTP. Residues asparagine 248–aspartate 251 are G4. The tract at residues valine 277–alanine 279 is G5. The 78-residue stretch at tyrosine 329–glutamate 406 folds into the KH type-2 domain.

It belongs to the TRAFAC class TrmE-Era-EngA-EngB-Septin-like GTPase superfamily. Era GTPase family.

It localises to the plastid. It is found in the chloroplast stroma. The protein resides in the chloroplast nucleoid. Nuclear genome-encoded probable GTPase involved in ribosome biogenesis in chloroplasts. Plays a role in 16S rRNA maturation in plastids and may contribute to the assembly of the small (30S) ribosomal subunit. In Arabidopsis thaliana (Mouse-ear cress), this protein is GTPase ERA-like, chloroplastic.